We begin with the raw amino-acid sequence, 1690 residues long: Collagen alpha-4(IV) chain (1690 aa).

An N-terminal signal peptide occupies residues 1-38 (MWSLHIVLMRCSFRLTKSLATGPWSLILILFSVQYVYG). The segment at 39–64 (SGKKYIGPCGGRDCSVCHCVPEKGSR) is 7S domain. Disordered regions lie at residues 61–173 (KGSR…GEKG) and 187–258 (GDRG…GPTL). Positions 65–1459 (GPPGPPGPQG…IGDPGPKGFG (1395 aa)) are triple-helical region. A compositionally biased stretch (pro residues) spans 66–75 (PPGPPGPQGP). Positions 76–88 (IGPLGAPGPIGLS) are enriched in low complexity. A Cell attachment site motif is present at residues 94–96 (RGD). Asn-142 carries an N-linked (GlcNAc...) asparagine glycan. Residues 145–147 (RGD) carry the Cell attachment site motif. A compositionally biased stretch (gly residues) spans 149–164 (GFPGGRGALGPGGPLG). Positions 189 to 191 (RGD) match the Cell attachment site motif. Residues 199–208 (GSWGAGGPAG) show a composition bias toward gly residues. The short motif at 310–312 (RGD) is the Cell attachment site element. Disordered stretches follow at residues 369–390 (PGDP…PGPP), 405–451 (GPPG…GLQG), and 469–1457 (GIKG…GPKG). The segment covering 412 to 434 (FPGLPGLPGEAGIPGRPDSAPGK) has biased composition (low complexity). 2 stretches are compositionally biased toward pro residues: residues 498–507 (PMGPPGPPGL) and 529–540 (PGPPGAEGPPGL). The segment covering 586 to 607 (HGRDGHAGEKGDPGPPGDHEDA) has biased composition (basic and acidic residues). Low complexity predominate over residues 644-655 (PGVPGHPGVRGP). An N-linked (GlcNAc...) asparagine glycan is attached at Asn-669. Over residues 681–690 (FDGPPGPKGF) the composition is skewed to pro residues. 2 short sequence motifs (cell attachment site) span residues 724-726 (RGD) and 785-787 (RGD). Gly residues predominate over residues 849–858 (GAPGGKGQPG). 2 stretches are compositionally biased toward low complexity: residues 866-880 (AGMK…RPGA) and 907-917 (PRGLPGFPGFP). Positions 989–991 (RGD) match the Cell attachment site motif. Pro residues predominate over residues 1023-1032 (PGPPGPPGPP). The span at 1108 to 1117 (PGIQGPRGSP) shows a compositional bias: low complexity. Over residues 1119-1131 (RPGPPGSSGPPGC) the composition is skewed to pro residues. The Cell attachment site motif lies at 1212-1214 (RGD). Pro residues-rich tracts occupy residues 1220–1243 (ISPP…PPGP), 1256–1280 (DPGP…PPGL), 1297–1309 (PGPP…PGPP), 1338–1353 (FPGP…PPGR), and 1443–1452 (GPGPPGPIGD). The region spanning 1465–1690 (GFLLVLHSQT…SRCQVCVKYS (226 aa)) is the Collagen IV NC1 domain. Disulfide bonds link Cys-1480/Cys-1569, Cys-1513/Cys-1566, Cys-1525/Cys-1531, Cys-1588/Cys-1686, Cys-1622/Cys-1683, and Cys-1634/Cys-1641.

The protein belongs to the type IV collagen family. There are six type IV collagen isoforms, alpha 1(IV)-alpha 6(IV), each of which can form a triple helix structure with 2 other chains to generate type IV collagen network. The alpha 3(IV) chain forms a triple helical protomer with alpha 4(IV) and alpha 5(IV); this triple helical structure dimerizes through NC1-NC1 domain interactions such that the alpha 3(IV), alpha 4(IV) and alpha 5(IV) chains of one protomer connect with the alpha 5(IV), alpha 4(IV) and alpha 3(IV) chains of the opposite protomer, respectively. Associates with LAMB2 at the neuromuscular junction and in GBM. In terms of processing, prolines at the third position of the tripeptide repeating unit (G-X-Y) are hydroxylated in some or all of the chains. Type IV collagens contain numerous cysteine residues which are involved in inter- and intramolecular disulfide bonding. 12 of these, located in the NC1 domain, are conserved in all known type IV collagens. Post-translationally, the trimeric structure of the NC1 domains is stabilized by covalent bonds between Lys and Met residues. In terms of tissue distribution, expressed in Bruch's membrane, outer plexiform layer, inner nuclear layer, inner plexiform layer, ganglion cell layer, inner limiting membrane and around the blood vessels of the retina (at protein level). Alpha 3 and alpha 4 type IV collagens are colocalized and present in kidney, eye, basement membranes of lens capsule, cochlea, lung, skeletal muscle, aorta, synaptic fibers, fetal kidney and fetal lung. PubMed:8083201 reports similar levels of expression of alpha 3 and alpha 4 type IV collagens in kidney, but PubMed:7523402 reports that in kidney levels of alpha 3 type IV collagen are significantly lower than those of alpha 4 type IV collagen. Highest levels of expression of alpha 4 type IV collagen are detected in kidney, calvaria, neuroretina and cardiac muscle. Lower levels of expression are observed in brain, lung and thymus, and no expression is detected in choroid plexus, liver, adrenal, pancreas, ileum or skin.

It is found in the secreted. Its subcellular location is the extracellular space. The protein localises to the extracellular matrix. It localises to the basement membrane. In terms of biological role, type IV collagen is the major structural component of glomerular basement membranes (GBM), forming a 'chicken-wire' meshwork together with laminins, proteoglycans and entactin/nidogen. This chain is Collagen alpha-4(IV) chain (COL4A4), found in Homo sapiens (Human).